We begin with the raw amino-acid sequence, 326 residues long: Elongation factor Ts (326 aa).

The involved in Mg(2+) ion dislocation from EF-Tu stretch occupies residues 80-83 (TDFV).

The protein belongs to the EF-Ts family.

Its subcellular location is the cytoplasm. Associates with the EF-Tu.GDP complex and induces the exchange of GDP to GTP. It remains bound to the aminoacyl-tRNA.EF-Tu.GTP complex up to the GTP hydrolysis stage on the ribosome. The sequence is that of Elongation factor Ts from Rhodopirellula baltica (strain DSM 10527 / NCIMB 13988 / SH1).